Here is a 227-residue protein sequence, read N- to C-terminus: Lipoprotein-releasing system ATP-binding protein LolD (227 aa).

Residues 6–227 (LTSQKLYKSY…LHEGSLYARE (222 aa)) enclose the ABC transporter domain. 42–49 (GPSGSGKS) is an ATP binding site.

It belongs to the ABC transporter superfamily. Lipoprotein translocase (TC 3.A.1.125) family. The complex is composed of two ATP-binding proteins (LolD) and two transmembrane proteins (LolC and LolE).

It is found in the cell inner membrane. Functionally, part of the ABC transporter complex LolCDE involved in the translocation of mature outer membrane-directed lipoproteins, from the inner membrane to the periplasmic chaperone, LolA. Responsible for the formation of the LolA-lipoprotein complex in an ATP-dependent manner. This chain is Lipoprotein-releasing system ATP-binding protein LolD, found in Legionella pneumophila (strain Lens).